The primary structure comprises 334 residues: Holliday junction branch migration complex subunit RuvB (334 aa).

The interval Ala-4–Tyr-184 is large ATPase domain (RuvB-L). Residues Ile-23, Arg-24, Gly-65, Lys-68, Thr-69, Thr-70, Glu-131–Tyr-133, Arg-174, Tyr-184, and Arg-221 contribute to the ATP site. Thr-69 is a binding site for Mg(2+). A small ATPAse domain (RuvB-S) region spans residues Gln-185–Asn-255. Positions Ala-258–Glu-334 are head domain (RuvB-H). Arg-294, Arg-313, and Arg-318 together coordinate DNA.

Belongs to the RuvB family. Homohexamer. Forms an RuvA(8)-RuvB(12)-Holliday junction (HJ) complex. HJ DNA is sandwiched between 2 RuvA tetramers; dsDNA enters through RuvA and exits via RuvB. An RuvB hexamer assembles on each DNA strand where it exits the tetramer. Each RuvB hexamer is contacted by two RuvA subunits (via domain III) on 2 adjacent RuvB subunits; this complex drives branch migration. In the full resolvosome a probable DNA-RuvA(4)-RuvB(12)-RuvC(2) complex forms which resolves the HJ.

It localises to the cytoplasm. The catalysed reaction is ATP + H2O = ADP + phosphate + H(+). Its function is as follows. The RuvA-RuvB-RuvC complex processes Holliday junction (HJ) DNA during genetic recombination and DNA repair, while the RuvA-RuvB complex plays an important role in the rescue of blocked DNA replication forks via replication fork reversal (RFR). RuvA specifically binds to HJ cruciform DNA, conferring on it an open structure. The RuvB hexamer acts as an ATP-dependent pump, pulling dsDNA into and through the RuvAB complex. RuvB forms 2 homohexamers on either side of HJ DNA bound by 1 or 2 RuvA tetramers; 4 subunits per hexamer contact DNA at a time. Coordinated motions by a converter formed by DNA-disengaged RuvB subunits stimulates ATP hydrolysis and nucleotide exchange. Immobilization of the converter enables RuvB to convert the ATP-contained energy into a lever motion, pulling 2 nucleotides of DNA out of the RuvA tetramer per ATP hydrolyzed, thus driving DNA branch migration. The RuvB motors rotate together with the DNA substrate, which together with the progressing nucleotide cycle form the mechanistic basis for DNA recombination by continuous HJ branch migration. Branch migration allows RuvC to scan DNA until it finds its consensus sequence, where it cleaves and resolves cruciform DNA. The polypeptide is Holliday junction branch migration complex subunit RuvB (Serratia proteamaculans (strain 568)).